Here is a 331-residue protein sequence, read N- to C-terminus: DNA polymerase IV (331 aa).

The region spanning 1 to 174 is the UmuC domain; that stretch reads FFAAVEMRDN…LPLAKIPGVG (174 aa). D92 is a Mg(2+) binding site. E93 is an active-site residue.

Belongs to the DNA polymerase type-Y family. As to quaternary structure, monomer. Requires Mg(2+) as cofactor.

The protein localises to the cytoplasm. It carries out the reaction DNA(n) + a 2'-deoxyribonucleoside 5'-triphosphate = DNA(n+1) + diphosphate. Poorly processive, error-prone DNA polymerase involved in untargeted mutagenesis. Copies undamaged DNA at stalled replication forks, which arise in vivo from mismatched or misaligned primer ends. These misaligned primers can be extended by PolIV. Exhibits no 3'-5' exonuclease (proofreading) activity. May be involved in translesional synthesis, in conjunction with the beta clamp from PolIII. This chain is DNA polymerase IV, found in Escherichia fergusonii.